The primary structure comprises 615 residues: NEDD8 ultimate buster 1 (615 aa).

Coiled-coil stretches lie at residues 36-70 (LALK…AIER) and 152-203 (KAMV…AAET). 3 UBA domains span residues 374 to 413 (YIDP…HITN), 424 to 470 (EEKE…LLSN), and 489 to 529 (SPSQ…LAHN). The short motif at 414–431 (RREELAQIRKEEKEKKRR) is the Nuclear localization signal element. Residues 427–474 (EKKRRRLENIRFLKGMGYSTHAAQQVLHAASGNLDEALKILLSNPQMW) form an NEDD8-binding 1 region. Positions 532-586 (SLPPELPLSPEDSLSPPATSPSDSAGTSSASTDEDMETEAVNEILEDIPEHEEDY) are disordered. The segment covering 539 to 562 (LSPEDSLSPPATSPSDSAGTSSAS) has biased composition (low complexity). The NEDD8-binding 2 stretch occupies residues 550-598 (TSPSDSAGTSSASTDEDMETEAVNEILEDIPEHEEDYLDSTLEDEEIII). The span at 563 to 586 (TDEDMETEAVNEILEDIPEHEEDY) shows a compositional bias: acidic residues.

In terms of assembly, directly interacts with NEDD8 and PSMD4/S5a, a member of the regulatory subunit of the 26S proteasome. Isoform 1 binds to NEDD8 more efficiently than isoform 2. Interacts with AIPL1. The interaction with UBD via UBA domains facilitates the linking of UBD-conjugated target protein to the proteasome complex and accelerates UBD degradation and that of its conjugates. Widely expressed with lowest expression in the pancreas for isoform 1 and in leukocytes, liver, prostate and skeletal muscle for isoform 2.

It localises to the nucleus. Functionally, specific down-regulator of the NEDD8 conjugation system. Recruits NEDD8, UBD, and their conjugates to the proteasome for degradation. Isoform 1 promotes the degradation of NEDD8 more efficiently than isoform 2. This chain is NEDD8 ultimate buster 1 (NUB1), found in Homo sapiens (Human).